The sequence spans 311 residues: R2-like ligand binding oxidase (311 aa).

Mn(2+) contacts are provided by Glu-68, Glu-101, and His-104. Residues 71 to 162 (VTQDIQPFMA…AAQVRASVTY (92 aa)) constitute a cross-link (3-(O4'-tyrosyl)-valine (Val-Tyr)). A Fe cation-binding site is contributed by Glu-101. Positions 167, 202, and 205 each coordinate Fe cation.

Belongs to the ribonucleoside diphosphate reductase small chain family. R2-like ligand binding oxidase subfamily. Homodimer. Requires Fe cation as cofactor. Mn(2+) serves as cofactor.

Functionally, probable oxidase that might be involved in lipid metabolism. The chain is R2-like ligand binding oxidase from Mycobacterium avium (strain 104).